We begin with the raw amino-acid sequence, 161 residues long: Nucleotide-binding protein Shal_3198 (161 aa).

It belongs to the YajQ family.

Nucleotide-binding protein. The protein is Nucleotide-binding protein Shal_3198 of Shewanella halifaxensis (strain HAW-EB4).